A 376-amino-acid polypeptide reads, in one-letter code: Mannosyl phosphorylinositol ceramide synthase CSH1 (376 aa).

2 consecutive transmembrane segments (helical) span residues 7–27 (ILIIANIALLISIIHYTFDLL) and 274–294 (ILSCVVTGFIFGFFILYGEFT). Positions 331 to 351 (NKEKRRNPTRHEYNSRGKRLR) are disordered. Serine 354 is subject to Phosphoserine.

The protein belongs to the glycosyltransferase 32 family. As to quaternary structure, heterodimer of CSH1 and CSG2.

It is found in the vacuole membrane. It carries out the reaction a 1D-myo-inositol-1-phospho-N-[(R)-2-hydroxy-very-long-chain fatty acyl]-(R)-4-hydroxysphingoid base + GDP-alpha-D-mannose = an alpha-D-mannosyl-(1&lt;-&gt;6)-1D-myo-inositol-1-phospho-N-[(R)-2-hydroxy-very-long-chain fatty acyl]-(R)-4-hydroxysphingoid base + GDP + H(+). Its function is as follows. Involved in the synthesis of mannosyl phosphorylinositol ceramide. Catalyzes the addition of mannosyl to phosphorylinositol ceramide. The sequence is that of Mannosyl phosphorylinositol ceramide synthase CSH1 from Saccharomyces cerevisiae (strain ATCC 204508 / S288c) (Baker's yeast).